Here is a 197-residue protein sequence, read N- to C-terminus: Nucleoid occlusion factor SlmA (197 aa).

The region spanning 7–67 is the HTH tetR-type domain; sequence INRREHILQC…GLIEFIEESL (61 aa). The segment at residues 30–49 is a DNA-binding region (H-T-H motif); that stretch reads TTAKLAAEVGVSEAALYRHF. Residues 109-136 are a coiled coil; that stretch reads DALLGENERLRSRISQLFSKIETHLKQI.

Belongs to the nucleoid occlusion factor SlmA family. As to quaternary structure, homodimer. Interacts with FtsZ.

It is found in the cytoplasm. It localises to the nucleoid. Its function is as follows. Required for nucleoid occlusion (NO) phenomenon, which prevents Z-ring formation and cell division over the nucleoid. Acts as a DNA-associated cell division inhibitor that binds simultaneously chromosomal DNA and FtsZ, and disrupts the assembly of FtsZ polymers. SlmA-DNA-binding sequences (SBS) are dispersed on non-Ter regions of the chromosome, preventing FtsZ polymerization at these regions. This chain is Nucleoid occlusion factor SlmA, found in Shewanella pealeana (strain ATCC 700345 / ANG-SQ1).